The following is a 274-amino-acid chain: Large ribosomal subunit protein uL2 (274 aa).

Residues 223–274 are disordered; the sequence is VAMNPVDHPHGGGEGRTSGGRHPVSPWGMPTKGFKTRKNKSTDKYIVRRRNK.

This sequence belongs to the universal ribosomal protein uL2 family. As to quaternary structure, part of the 50S ribosomal subunit. Forms a bridge to the 30S subunit in the 70S ribosome.

In terms of biological role, one of the primary rRNA binding proteins. Required for association of the 30S and 50S subunits to form the 70S ribosome, for tRNA binding and peptide bond formation. It has been suggested to have peptidyltransferase activity; this is somewhat controversial. Makes several contacts with the 16S rRNA in the 70S ribosome. This Aliivibrio fischeri (strain ATCC 700601 / ES114) (Vibrio fischeri) protein is Large ribosomal subunit protein uL2.